The primary structure comprises 612 residues: Peroxisomal carnitine O-octanoyltransferase (612 aa).

N-acetylmethionine is present on methionine 1. 2 positions are modified to N6-succinyllysine: lysine 40 and lysine 57. Residue histidine 327 is the Proton acceptor of the active site. CoA contacts are provided by residues lysine 406 and 410-417 (KKEALHPD). At lysine 406 the chain carries N6-acetyllysine; alternate. Lysine 406 is subject to N6-succinyllysine; alternate. (R)-carnitine is bound by residues tyrosine 439, threonine 441, and threonine 452. The short motif at 610 to 612 (AHL) is the Microbody targeting signal element.

It belongs to the carnitine/choline acetyltransferase family. In terms of tissue distribution, liver.

Its subcellular location is the peroxisome. It carries out the reaction octanoyl-CoA + (R)-carnitine = O-octanoyl-(R)-carnitine + CoA. The catalysed reaction is 4,8-dimethylnonanoyl-CoA + (R)-carnitine = O-4,8-dimethylnonanoyl-(R)-carnitine + CoA. Its pathway is lipid metabolism; fatty acid beta-oxidation. Its function is as follows. Beta-oxidation of fatty acids. The highest activity concerns the C6 to C10 chain length substrate. This is Peroxisomal carnitine O-octanoyltransferase (Crot) from Rattus norvegicus (Rat).